The following is a 225-amino-acid chain: 3-dehydroquinate dehydratase (225 aa).

3-dehydroquinate contacts are provided by residues Ser-6, 30–32 (EWR), and Arg-62. His-118 acts as the Proton donor/acceptor in catalysis. Lys-143 (schiff-base intermediate with substrate) is an active-site residue. 3-dehydroquinate is bound by residues Arg-186, Ser-205, and Gln-209.

This sequence belongs to the type-I 3-dehydroquinase family. As to quaternary structure, homodimer.

It catalyses the reaction 3-dehydroquinate = 3-dehydroshikimate + H2O. The protein operates within metabolic intermediate biosynthesis; chorismate biosynthesis; chorismate from D-erythrose 4-phosphate and phosphoenolpyruvate: step 3/7. Functionally, involved in the third step of the chorismate pathway, which leads to the biosynthesis of aromatic amino acids. Catalyzes the cis-dehydration of 3-dehydroquinate (DHQ) and introduces the first double bond of the aromatic ring to yield 3-dehydroshikimate. This chain is 3-dehydroquinate dehydratase, found in Streptococcus pneumoniae (strain ATCC 700669 / Spain 23F-1).